We begin with the raw amino-acid sequence, 127 residues long: Small ribosomal subunit protein uS12 (127 aa).

The residue at position 89 (Asp89) is a 3-methylthioaspartic acid. The segment at 104–127 is disordered; it reads TQGVKDRKQARSKYGTKRAKAGKK. The segment covering 113-127 has biased composition (basic residues); the sequence is ARSKYGTKRAKAGKK.

This sequence belongs to the universal ribosomal protein uS12 family. In terms of assembly, part of the 30S ribosomal subunit. Contacts proteins S8 and S17. May interact with IF1 in the 30S initiation complex.

In terms of biological role, with S4 and S5 plays an important role in translational accuracy. Functionally, interacts with and stabilizes bases of the 16S rRNA that are involved in tRNA selection in the A site and with the mRNA backbone. Located at the interface of the 30S and 50S subunits, it traverses the body of the 30S subunit contacting proteins on the other side and probably holding the rRNA structure together. The combined cluster of proteins S8, S12 and S17 appears to hold together the shoulder and platform of the 30S subunit. The protein is Small ribosomal subunit protein uS12 of Herminiimonas arsenicoxydans.